Here is a 213-residue protein sequence, read N- to C-terminus: Probable transaldolase (213 aa).

Lys-83 functions as the Schiff-base intermediate with substrate in the catalytic mechanism.

It belongs to the transaldolase family. Type 3B subfamily.

The protein resides in the cytoplasm. The catalysed reaction is D-sedoheptulose 7-phosphate + D-glyceraldehyde 3-phosphate = D-erythrose 4-phosphate + beta-D-fructose 6-phosphate. The protein operates within carbohydrate degradation; pentose phosphate pathway; D-glyceraldehyde 3-phosphate and beta-D-fructose 6-phosphate from D-ribose 5-phosphate and D-xylulose 5-phosphate (non-oxidative stage): step 2/3. In terms of biological role, transaldolase is important for the balance of metabolites in the pentose-phosphate pathway. The sequence is that of Probable transaldolase from Geobacillus thermodenitrificans (strain NG80-2).